The chain runs to 76 residues: uncharacterized protein (76 aa).

The disordered stretch occupies residues Ser27–Leu76.

This is an uncharacterized protein from Caenorhabditis elegans.